Here is a 244-residue protein sequence, read N- to C-terminus: 5-oxoprolinase subunit A (244 aa).

The protein belongs to the LamB/PxpA family. As to quaternary structure, forms a complex composed of PxpA, PxpB and PxpC.

It carries out the reaction 5-oxo-L-proline + ATP + 2 H2O = L-glutamate + ADP + phosphate + H(+). Catalyzes the cleavage of 5-oxoproline to form L-glutamate coupled to the hydrolysis of ATP to ADP and inorganic phosphate. This chain is 5-oxoprolinase subunit A, found in Escherichia fergusonii (strain ATCC 35469 / DSM 13698 / CCUG 18766 / IAM 14443 / JCM 21226 / LMG 7866 / NBRC 102419 / NCTC 12128 / CDC 0568-73).